The following is a 269-amino-acid chain: Troponin T, fast skeletal muscle (269 aa).

A compositionally biased stretch (acidic residues) spans 1–23 (MSDEEVEQVEEQYEEEEEAQEEA). The interval 1-72 (MSDEEVEQVE…EKVDFDDIQK (72 aa)) is disordered. Ser-2 is subject to N-acetylserine. Ser-2 carries the phosphoserine modification. Positions 24 to 34 (AEVHEEVHEPE) are enriched in basic and acidic residues. A compositionally biased stretch (acidic residues) spans 35–47 (EVQEDTAEEDAEE). Residues 60–72 (PEGEKVDFDDIQK) show a composition bias toward basic and acidic residues. Ser-88 is modified (phosphoserine). The span at 111–153 (RAERAEQQRIRAEKERERQNRLAEEKARREEEDAKRRAEDDLK) shows a compositional bias: basic and acidic residues. The interval 111–158 (RAERAEQQRIRAEKERERQNRLAEEKARREEEDAKRRAEDDLKKKKAL) is disordered. Ser-159, Ser-166, and Ser-167 each carry phosphoserine. Residues 245–269 (RIDQAQKHSKKAGTPAKGKVGGRWK) form a disordered region.

This sequence belongs to the troponin T family. As to expression, in fetal and adult fast skeletal muscles, with a higher level expression in fetal than in adult muscle.

In terms of biological role, troponin T is the tropomyosin-binding subunit of troponin, the thin filament regulatory complex which confers calcium-sensitivity to striated muscle actomyosin ATPase activity. The sequence is that of Troponin T, fast skeletal muscle (TNNT3) from Homo sapiens (Human).